Here is a 128-residue protein sequence, read N- to C-terminus: Protein yippee-like At3g08990 (128 aa).

The 98-residue stretch at 12 to 109 (LVYSCKYCQT…LERFKVLGPY (98 aa)) folds into the Yippee domain. 4 residues coordinate Zn(2+): Cys16, Cys19, Cys72, and Cys75.

This sequence belongs to the yippee family.

This Arabidopsis thaliana (Mouse-ear cress) protein is Protein yippee-like At3g08990.